Reading from the N-terminus, the 286-residue chain is Putative S-adenosyl-L-methionine-dependent methyltransferase FRAAL3718 (286 aa).

S-adenosyl-L-methionine-binding positions include Asp122 and Asp151–Leu152.

It belongs to the UPF0677 family.

Its function is as follows. Exhibits S-adenosyl-L-methionine-dependent methyltransferase activity. This is Putative S-adenosyl-L-methionine-dependent methyltransferase FRAAL3718 from Frankia alni (strain DSM 45986 / CECT 9034 / ACN14a).